The chain runs to 173 residues: Crossover junction endodeoxyribonuclease RuvC (173 aa).

Residues Asp8, Glu67, and Asp139 contribute to the active site. Positions 8, 67, and 139 each coordinate Mg(2+).

It belongs to the RuvC family. Homodimer which binds Holliday junction (HJ) DNA. The HJ becomes 2-fold symmetrical on binding to RuvC with unstacked arms; it has a different conformation from HJ DNA in complex with RuvA. In the full resolvosome a probable DNA-RuvA(4)-RuvB(12)-RuvC(2) complex forms which resolves the HJ. Mg(2+) is required as a cofactor.

It is found in the cytoplasm. It catalyses the reaction Endonucleolytic cleavage at a junction such as a reciprocal single-stranded crossover between two homologous DNA duplexes (Holliday junction).. In terms of biological role, the RuvA-RuvB-RuvC complex processes Holliday junction (HJ) DNA during genetic recombination and DNA repair. Endonuclease that resolves HJ intermediates. Cleaves cruciform DNA by making single-stranded nicks across the HJ at symmetrical positions within the homologous arms, yielding a 5'-phosphate and a 3'-hydroxyl group; requires a central core of homology in the junction. The consensus cleavage sequence is 5'-(A/T)TT(C/G)-3'. Cleavage occurs on the 3'-side of the TT dinucleotide at the point of strand exchange. HJ branch migration catalyzed by RuvA-RuvB allows RuvC to scan DNA until it finds its consensus sequence, where it cleaves and resolves the cruciform DNA. The sequence is that of Crossover junction endodeoxyribonuclease RuvC from Salmonella agona (strain SL483).